A 1822-amino-acid chain; its full sequence is Signal-induced proliferation-associated 1-like protein 1 (1822 aa).

Disordered stretches follow at residues 1–30 (MTSL…PKVH) and 47–125 (GSSV…VSLN). Residues 84–94 (PPRKENVKESS) are compositionally biased toward basic and acidic residues. Positions 95–125 (RSSQEIETSSCLESLSSKGSPVSQGSSVSLN) are enriched in low complexity. Residues Ser162, Ser187, Ser193, Ser208, Ser255, and Ser288 each carry the phosphoserine modification. Positions 277 to 297 (EREKPLKRRSKSETGDSSIFR) are disordered. One can recognise a Rap-GAP domain in the interval 638–855 (FMKLDEQGLN…RTRQEYLKDL (218 aa)). Residues 992-1068 (EMTLRRNGLG…VKVVIIPPHD (77 aa)) form the PDZ domain. 7 positions are modified to phosphoserine: Ser1117, Ser1126, Ser1155, Ser1166, Ser1188, Ser1209, and Ser1220. The interval 1134 to 1165 (AGKGDGKMPLPERAANIPRSISSDGRPLERRL) is disordered. Residues 1183 to 1252 (SQCRNSPSNL…WQRSEDSLAD (70 aa)) are disordered. A compositionally biased stretch (low complexity) spans 1188 to 1198 (SPSNLSSSSET). A compositionally biased stretch (polar residues) spans 1225–1244 (DRQNTQSDIGGSGKSTPSWQ). A phosphoserine mark is found at Ser1273 and Ser1288. Residues 1286–1324 (HLSPNKQGHSDSHYSSHSSSNTLSSNASSAHSDEKWYDG) form a disordered region. Low complexity predominate over residues 1300–1315 (SSHSSSNTLSSNASSA). Phosphoserine; by PLK2 is present on Ser1344. Thr1348 is modified (phosphothreonine; by PLK2). Low complexity predominate over residues 1358 to 1367 (TASLGASTSS). Residues 1358 to 1382 (TASLGASTSSPRSGPGKEKVAPLWH) are disordered. Ser1367 is modified (phosphoserine; by CDK5). A Phosphoserine modification is found at Ser1384. Positions 1395 to 1407 (LETEGHGMDRKTE) are enriched in basic and acidic residues. A disordered region spans residues 1395–1493 (LETEGHGMDR…SSSGPRTFYP (99 aa)). 5 positions are modified to phosphoserine: Ser1408, Ser1409, Ser1430, Ser1449, and Ser1451. The span at 1417–1436 (KSQGGSSPLTRENSTFSIND) shows a compositional bias: polar residues. Low complexity-rich tracts occupy residues 1437–1451 (ATSH…HSAS) and 1471–1486 (SSQL…SSSS). Phosphoserine occurs at positions 1546 and 1567. A disordered region spans residues 1567-1595 (SPTPESQKNFKFHGLSSPQSPFPSTPTSR). Thr1569 is subject to Phosphothreonine. A phosphoserine mark is found at Ser1572, Ser1583, Ser1586, Ser1603, and Ser1606. Arg1619 is subject to Asymmetric dimethylarginine. A phosphoserine mark is found at Ser1621, Ser1665, Ser1668, Ser1726, Ser1729, Ser1746, Ser1747, and Ser1752. A coiled-coil region spans residues 1753–1813 (PTLASKVDQL…ASDKLKKFTE (61 aa)).

Interacts (via PDZ domain) with EPHA4 (via PDZ motif); controls neuronal morphology through regulation of the RAP1 (RAP1A or RAP1B) and RAP2 (RAP2A, RAP2B or RAP2C) GTPases. Interacts with DLG4, PDLIM5, PDLIM7 and LZTS3. Interacts with the actin cytoskeleton. In terms of processing, ubiquitinated and degraded by the SCF(BTRC) following phosphorylation by PLK2. Phosphorylated at Ser-1367 by CDK5, creating a docking site for the POLO box domains of PLK2. Subsequently, PLK2 binds and phosphorylates SIPA1L1, leading to ubiquitination and degradation by the proteasome. Detected in brain (at protein level).

It is found in the cytoplasm. The protein localises to the cytoskeleton. Its subcellular location is the postsynaptic density. The protein resides in the synapse. It localises to the synaptosome. In terms of biological role, stimulates the GTPase activity of RAP2A. Promotes reorganization of the actin cytoskeleton and recruits DLG4 to F-actin. Contributes to the regulation of dendritic spine morphogenesis. This chain is Signal-induced proliferation-associated 1-like protein 1 (Sipa1l1), found in Rattus norvegicus (Rat).